Here is a 199-residue protein sequence, read N- to C-terminus: MRFRFCGDLDCPDWVLAEISTLAKISSVKLRLLCSQVLKELLGQGIDYEKILKLTADAKFESGDVKATVAVLSFILSSAAKHSVDSDSLSSELQQLGLPKEHATSLCRCYEEKQSPLQEHLRACSLRVNRLASVGWRVDYTLSSSLLHSVEEPMVHLQLQVVPAPGTQAQPVSMSLSADKFQVLLAELKQAQTMMTALG.

A COMM domain is found at 130-199 (RLASVGWRVD…QAQTMMTALG (70 aa)).

This sequence belongs to the COMM domain-containing protein 4 family. As to quaternary structure, component of the commander complex consisting of the CCC subcomplex and the retriever subcomplex. Component of the CCC (COMMD/CCDC22/CCDC93) subcomplex consisting of COMMD1, COMMD2, COMMD3, COMMD4, COMMD5, COMMD6, COMMD7, COMMD8, COMMD9, COMMD10, CCDC22 and CCDC93; within the complex forms a heterodimer with COMMD8. Interacts with RELA, RELB, NFKB1/p105. Interacts with CCDC22, CCDC93, SCNN1B, CUL2, CUL3, CUL4A, CUL5, CUL7.

The protein localises to the cytoplasm. It is found in the nucleus. Functionally, scaffold protein in the commander complex that is essential for endosomal recycling of transmembrane cargos; the commander complex is composed of the CCC subcomplex and the retriever subcomplex. May modulate activity of cullin-RING E3 ubiquitin ligase (CRL) complexes. Down-regulates activation of NF-kappa-B. The polypeptide is COMM domain-containing protein 4 (Commd4) (Mus musculus (Mouse)).